A 350-amino-acid chain; its full sequence is ATPase GET3 (350 aa).

Residue 26 to 33 (KGGVGKTT) participates in ATP binding. D57 is a catalytic residue. Residues E243 and N270 each contribute to the ATP site. The Zn(2+) site is built by C282 and C285.

Belongs to the arsA ATPase family. As to quaternary structure, homodimer. Component of the Golgi to ER traffic (GET) complex, which is composed of GET1, GET2 and GET3. Within the complex, GET1 and GET2 form a heterotetramer which is stabilized by phosphatidylinositol binding and which binds to the GET3 homodimer. Interacts with the chloride channel protein GEF1.

Its subcellular location is the cytoplasm. The protein resides in the endoplasmic reticulum. It is found in the golgi apparatus. ATPase required for the post-translational delivery of tail-anchored (TA) proteins to the endoplasmic reticulum. Recognizes and selectively binds the transmembrane domain of TA proteins in the cytosol. This complex then targets to the endoplasmic reticulum by membrane-bound receptors GET1 and GET2, where the tail-anchored protein is released for insertion. This process is regulated by ATP binding and hydrolysis. ATP binding drives the homodimer towards the closed dimer state, facilitating recognition of newly synthesized TA membrane proteins. ATP hydrolysis is required for insertion. Subsequently, the homodimer reverts towards the open dimer state, lowering its affinity for the GET1-GET2 receptor, and returning it to the cytosol to initiate a new round of targeting. Cooperates with the HDEL receptor ERD2 to mediate the ATP-dependent retrieval of resident ER proteins that contain a C-terminal H-D-E-L retention signal from the Golgi to the ER. Involved in low-level resistance to the oxyanions arsenite and arsenate, and in heat tolerance. In Candida dubliniensis (strain CD36 / ATCC MYA-646 / CBS 7987 / NCPF 3949 / NRRL Y-17841) (Yeast), this protein is ATPase GET3.